The primary structure comprises 421 residues: UDP-N-acetylglucosamine 1-carboxyvinyltransferase (421 aa).

Residue 22-23 (KN) coordinates phosphoenolpyruvate. UDP-N-acetyl-alpha-D-glucosamine is bound at residue arginine 93. Cysteine 117 (proton donor) is an active-site residue. At cysteine 117 the chain carries 2-(S-cysteinyl)pyruvic acid O-phosphothioketal. UDP-N-acetyl-alpha-D-glucosamine is bound by residues 122–126 (RPVDL), aspartate 308, and isoleucine 330.

It belongs to the EPSP synthase family. MurA subfamily.

Its subcellular location is the cytoplasm. The catalysed reaction is phosphoenolpyruvate + UDP-N-acetyl-alpha-D-glucosamine = UDP-N-acetyl-3-O-(1-carboxyvinyl)-alpha-D-glucosamine + phosphate. It participates in cell wall biogenesis; peptidoglycan biosynthesis. Functionally, cell wall formation. Adds enolpyruvyl to UDP-N-acetylglucosamine. The protein is UDP-N-acetylglucosamine 1-carboxyvinyltransferase of Pseudomonas fluorescens (strain ATCC BAA-477 / NRRL B-23932 / Pf-5).